A 433-amino-acid chain; its full sequence is PHO85 cyclin-10 (433 aa).

The segment covering 1-10 (MDMTKNHTTD) has biased composition (basic and acidic residues). Disordered regions lie at residues 1-20 (MDMT…GDIR) and 51-81 (LTSE…TTDS). Polar residues predominate over residues 51–63 (LTSEWDQSRSNTP).

The protein belongs to the cyclin family. PHO80 subfamily. As to quaternary structure, forms a cyclin-CDK complex with PHO85. Interacts with GSY2, independent of the presence of PHO85.

It localises to the cytoplasm. Its function is as follows. Cyclin partner of the cyclin-dependent kinase (CDK) PHO85. Together with cyclin PCL8, negatively controls glycogen accumulation under favorable growth conditions. The PCL10-PHO85 cyclin-CDK holoenzyme has glycogen synthase kinase activity and phosphorylates and negatively regulates glycogen synthase GSY2. Also has minor GLC8 kinase activity. The protein is PHO85 cyclin-10 (PCL10) of Saccharomyces cerevisiae (strain ATCC 204508 / S288c) (Baker's yeast).